Here is a 191-residue protein sequence, read N- to C-terminus: Thymidine kinase (191 aa).

ATP contacts are provided by residues 15–22 (GPMYSGKT) and 88–91 (DEAQ). Glutamate 89 functions as the Proton acceptor in the catalytic mechanism. Zn(2+) contacts are provided by cysteine 145, cysteine 148, cysteine 183, and cysteine 186.

Belongs to the thymidine kinase family. Homotetramer.

It is found in the cytoplasm. It catalyses the reaction thymidine + ATP = dTMP + ADP + H(+). The polypeptide is Thymidine kinase (Clostridium botulinum (strain Hall / ATCC 3502 / NCTC 13319 / Type A)).